Consider the following 515-residue polypeptide: Probable cytosol aminopeptidase (515 aa).

Mn(2+)-binding residues include Lys-277 and Asp-282. The active site involves Lys-289. Mn(2+)-binding residues include Asp-300, Asp-359, and Glu-361. Residue Arg-363 is part of the active site.

It belongs to the peptidase M17 family. Mn(2+) is required as a cofactor.

The protein localises to the cytoplasm. The enzyme catalyses Release of an N-terminal amino acid, Xaa-|-Yaa-, in which Xaa is preferably Leu, but may be other amino acids including Pro although not Arg or Lys, and Yaa may be Pro. Amino acid amides and methyl esters are also readily hydrolyzed, but rates on arylamides are exceedingly low.. The catalysed reaction is Release of an N-terminal amino acid, preferentially leucine, but not glutamic or aspartic acids.. In terms of biological role, presumably involved in the processing and regular turnover of intracellular proteins. Catalyzes the removal of unsubstituted N-terminal amino acids from various peptides. This is Probable cytosol aminopeptidase from Streptomyces griseus subsp. griseus (strain JCM 4626 / CBS 651.72 / NBRC 13350 / KCC S-0626 / ISP 5235).